The sequence spans 43 residues: Protein PsbN (43 aa).

A helical transmembrane segment spans residues 5–27 (TLVAIFISCSLVSFTGYALYTAF).

This sequence belongs to the PsbN family.

The protein resides in the plastid. The protein localises to the chloroplast thylakoid membrane. May play a role in photosystem I and II biogenesis. This is Protein PsbN from Exsertotheca crispa (Moss).